We begin with the raw amino-acid sequence, 61 residues long: Large ribosomal subunit protein uL30 (61 aa).

It belongs to the universal ribosomal protein uL30 family. Part of the 50S ribosomal subunit.

The protein is Large ribosomal subunit protein uL30 of Rhizorhabdus wittichii (strain DSM 6014 / CCUG 31198 / JCM 15750 / NBRC 105917 / EY 4224 / RW1) (Sphingomonas wittichii).